Consider the following 102-residue polypeptide: Putative septation protein SpoVG 1 (102 aa).

It belongs to the SpoVG family.

Functionally, could be involved in septation. This is Putative septation protein SpoVG 1 from Listeria monocytogenes serotype 4b (strain F2365).